A 70-amino-acid polypeptide reads, in one-letter code: Small ribosomal subunit protein bS21 (70 aa).

This sequence belongs to the bacterial ribosomal protein bS21 family.

The polypeptide is Small ribosomal subunit protein bS21 (Delftia acidovorans (strain DSM 14801 / SPH-1)).